The primary structure comprises 52 residues: uncharacterized protein (52 aa).

The segment at 1–52 is disordered; that stretch reads MVNNDAKIGRREFYDRVESVRPKSPPRERPTYTYSNSRTVDGYSNRGPRADF. The segment covering 7–30 has biased composition (basic and acidic residues); it reads KIGRREFYDRVESVRPKSPPRERP.

This is an uncharacterized protein from Dictyostelium discoideum (Social amoeba).